A 452-amino-acid polypeptide reads, in one-letter code: Probable cysteine protease RD21C (452 aa).

The N-terminal stretch at 1 to 29 (MATSIKSITLALLIFSVLLISLSLGSVTA) is a signal peptide. A propeptide spans 30 to 128 (TETTRNEAEA…EKYLYKVGDS (99 aa)) (activation peptide). N-linked (GlcNAc...) asparagine glycosylation is present at Asn-82. 5 cysteine pairs are disulfide-bonded: Cys-150–Cys-192, Cys-184–Cys-226, Cys-284–Cys-335, Cys-363–Cys-375, and Cys-369–Cys-390. Residue Cys-153 is part of the active site. Active-site residues include His-290 and Asn-310. Positions 346–452 (KSSGSNPPKP…KSTNMLVGSA (107 aa)) are cleaved as a propeptide — removed in mature form.

It belongs to the peptidase C1 family. Interacts with WSCP.

In terms of biological role, probable thiol protease. The sequence is that of Probable cysteine protease RD21C from Arabidopsis thaliana (Mouse-ear cress).